The chain runs to 382 residues: MKTELSLLDRSLNLQRYPKRAQELLQAWDAGDEYIIKYVEEELNLEDGKNILILNDNFGALSCWFSDKHNVTMMTDSFVSQRGTLKNLQRNQCNRVQLITSTEEMPQGFDLVLMQIPKNNRMLTWQLQQLRQSMDSSCPIIAVNKAKEIHSSTLELFEDYLGETKTSLAWKKHRLVFSNANASNPKTIAEAVCWSVDNEDIDLLNYPNVYSGEKLDQGARFMLEHIPSDPELRHIIDLGCGNGVLSVKAGQLNPEARITCVDESFMAVESARRNLEVNLGKERQFQFIANNCLDGFKKHSSYLVLCNPPFHQGQAITDHIAWQMFCDAKHILCKDGKLLVIGNRHLDYDGKLCRLFGEENVTTVASNSKFVILEAVKAEKSK.

It belongs to the methyltransferase superfamily. RlmG family.

It is found in the cytoplasm. It catalyses the reaction guanosine(1835) in 23S rRNA + S-adenosyl-L-methionine = N(2)-methylguanosine(1835) in 23S rRNA + S-adenosyl-L-homocysteine + H(+). Specifically methylates the guanine in position 1835 (m2G1835) of 23S rRNA. This Aliivibrio fischeri (strain MJ11) (Vibrio fischeri) protein is Ribosomal RNA large subunit methyltransferase G.